A 541-amino-acid chain; its full sequence is Chaperonin GroEL (541 aa).

ATP contacts are provided by residues 29–32 (TLGP), 86–90 (DGTTT), Gly-413, 476–478 (NAA), and Asp-492. The disordered stretch occupies residues 521 to 541 (KPEDNPAPAAPAANPGMGGMM). Low complexity predominate over residues 526 to 535 (PAPAAPAANP).

Belongs to the chaperonin (HSP60) family. In terms of assembly, forms a cylinder of 14 subunits composed of two heptameric rings stacked back-to-back. Interacts with the co-chaperonin GroES.

Its subcellular location is the cytoplasm. The catalysed reaction is ATP + H2O + a folded polypeptide = ADP + phosphate + an unfolded polypeptide.. Together with its co-chaperonin GroES, plays an essential role in assisting protein folding. The GroEL-GroES system forms a nano-cage that allows encapsulation of the non-native substrate proteins and provides a physical environment optimized to promote and accelerate protein folding. The protein is Chaperonin GroEL of Levilactobacillus brevis (strain ATCC 367 / BCRC 12310 / CIP 105137 / JCM 1170 / LMG 11437 / NCIMB 947 / NCTC 947) (Lactobacillus brevis).